A 306-amino-acid chain; its full sequence is Dermonecrotic toxin LiSicTox-alphaIA1bi (306 aa).

The N-terminal stretch at 1–18 (MLPYIVLVLGCWSVLSQA) is a signal peptide. The propeptide occupies 19–26 (AQTDDEER). Residue His-38 is part of the active site. Mg(2+) contacts are provided by Glu-58 and Asp-60. The active-site Nucleophile is the His-74. 2 disulfides stabilise this stretch: Cys-78–Cys-84 and Cys-80–Cys-223. A Mg(2+)-binding site is contributed by Asp-118.

Belongs to the arthropod phospholipase D family. Class II subfamily. Class IIa sub-subfamily. Mg(2+) is required as a cofactor. As to expression, expressed by the venom gland.

Its subcellular location is the secreted. The enzyme catalyses an N-(acyl)-sphingosylphosphocholine = an N-(acyl)-sphingosyl-1,3-cyclic phosphate + choline. It catalyses the reaction an N-(acyl)-sphingosylphosphoethanolamine = an N-(acyl)-sphingosyl-1,3-cyclic phosphate + ethanolamine. The catalysed reaction is a 1-acyl-sn-glycero-3-phosphocholine = a 1-acyl-sn-glycero-2,3-cyclic phosphate + choline. It carries out the reaction a 1-acyl-sn-glycero-3-phosphoethanolamine = a 1-acyl-sn-glycero-2,3-cyclic phosphate + ethanolamine. In terms of biological role, dermonecrotic toxins cleave the phosphodiester linkage between the phosphate and headgroup of certain phospholipids (sphingolipid and lysolipid substrates), forming an alcohol (often choline) and a cyclic phosphate. This toxin acts on sphingomyelin (SM). The level of enzymatic activity is high according to Tambourgi and colleagues or low according to Felicori and colleagues. It may also act on ceramide phosphoethanolamine (CPE), lysophosphatidylcholine (LPC) and lysophosphatidylethanolamine (LPE), but not on lysophosphatidylserine (LPS), and lysophosphatidylglycerol (LPG). It acts by transphosphatidylation, releasing exclusively cyclic phosphate products as second products. It induces complement-dependent hemolysis, dermonecrosis, vascular permeability and platelet aggregation. Both C5a and the membrane attack complex may play a role in the induction of dermonecrosis. MMP-9 and MMP-2 produced by skin fibroblasts can also contribute to proteolytic tissue destruction. This Loxosceles intermedia (Brown spider) protein is Dermonecrotic toxin LiSicTox-alphaIA1bi.